The chain runs to 390 residues: Methylthioribose-1-phosphate isomerase (390 aa).

Catalysis depends on Asp258, which acts as the Proton donor.

The protein belongs to the eIF-2B alpha/beta/delta subunits family. MtnA subfamily.

The protein localises to the cytoplasm. It localises to the nucleus. It catalyses the reaction 5-(methylsulfanyl)-alpha-D-ribose 1-phosphate = 5-(methylsulfanyl)-D-ribulose 1-phosphate. Its pathway is amino-acid biosynthesis; L-methionine biosynthesis via salvage pathway; L-methionine from S-methyl-5-thio-alpha-D-ribose 1-phosphate: step 1/6. Catalyzes the interconversion of methylthioribose-1-phosphate (MTR-1-P) into methylthioribulose-1-phosphate (MTRu-1-P). In Coccidioides posadasii (strain C735) (Valley fever fungus), this protein is Methylthioribose-1-phosphate isomerase.